The primary structure comprises 239 residues: tRNA (guanine-N(7)-)-methyltransferase (239 aa).

S-adenosyl-L-methionine contacts are provided by E69, E94, D121, and D144. D144 is an active-site residue. Residues K148, D180, and 217-220 (TKFE) contribute to the substrate site.

The protein belongs to the class I-like SAM-binding methyltransferase superfamily. TrmB family. In terms of assembly, monomer.

It catalyses the reaction guanosine(46) in tRNA + S-adenosyl-L-methionine = N(7)-methylguanosine(46) in tRNA + S-adenosyl-L-homocysteine. The protein operates within tRNA modification; N(7)-methylguanine-tRNA biosynthesis. In terms of biological role, catalyzes the formation of N(7)-methylguanine at position 46 (m7G46) in tRNA. The protein is tRNA (guanine-N(7)-)-methyltransferase of Buchnera aphidicola subsp. Acyrthosiphon pisum (strain Tuc7).